The chain runs to 655 residues: Sphingomyelin phosphodiesterase 3 (655 aa).

Over 1–10 (MVLYTTPFPN) the chain is Cytoplasmic. Residues 11-31 (SCLSALHCVSWALIFPCYWLV) constitute an intramembrane region (helical). Residues 32 to 64 (DRLAASFIPTTYEKRQRADDPCCLQLLCTALFT) lie on the Cytoplasmic side of the membrane. 3 S-palmitoyl cysteine lipidation sites follow: cysteine 53, cysteine 54, and cysteine 59. Positions 65 to 85 (PIYLALLVASLPFAFLGFLFW) form an intramembrane region, helical. The Cytoplasmic portion of the chain corresponds to 86-655 (SPLQSARRPY…LMVSSGEEEA (570 aa)). The residue at position 178 (serine 178) is a Phosphoserine. The disordered stretch occupies residues 210–319 (VEYKGDGGRH…DTSASGEPGA (110 aa)). Composition is skewed to basic and acidic residues over residues 212-222 (YKGDGGRHPGD) and 248-257 (GGEEGGRPPE). Residues 279–299 (TPNHNQQDGDSGSLGSPSASR) are compositionally biased toward polar residues. Serine 291 carries the post-translational modification Phosphoserine. Glutamate 364 is a binding site for Mg(2+). 2 S-palmitoyl cysteine lipidation sites follow: cysteine 397 and cysteine 398. Histidine 639 functions as the Proton acceptor in the catalytic mechanism.

It belongs to the neutral sphingomyelinase family. Requires Mg(2+) as cofactor. In terms of processing, palmitoylated, palmitoylation-deficient proteins are targeted for lysosomal degradation. In terms of tissue distribution, predominantly expressed in brain.

Its subcellular location is the golgi apparatus membrane. The protein localises to the cell membrane. The enzyme catalyses a sphingomyelin + H2O = phosphocholine + an N-acylsphing-4-enine + H(+). The catalysed reaction is N-(15Z-tetracosenoyl)sphing-4-enine-1-phosphocholine + H2O = N-(15Z-tetracosenoyl)-sphing-4-enine + phosphocholine + H(+). It catalyses the reaction N-(tetracosanoyl)-sphing-4-enine-1-phosphocholine + H2O = N-tetracosanoyl-sphing-4-enine + phosphocholine + H(+). It carries out the reaction an N-(acyl)-sphingosylphosphocholine + H2O = an N-acyl-sphingoid base + phosphocholine + H(+). The enzyme catalyses 1-hexadecanoyl-sn-glycero-3-phosphocholine + H2O = 1-hexadecanoyl-sn-glycerol + phosphocholine + H(+). The catalysed reaction is 1-O-octadecyl-sn-glycero-3-phosphocholine + H2O = 1-O-octadecyl-sn-glycerol + phosphocholine + H(+). It catalyses the reaction a sphingosylphosphocholine + H2O = a sphingoid base + phosphocholine + H(+). It carries out the reaction N-(hexadecanoyl)-sphing-4-enine-1-phosphocholine + H2O = N-hexadecanoylsphing-4-enine + phosphocholine + H(+). It participates in lipid metabolism; sphingolipid metabolism. Inhibited by nSMase inhibitor GW4869. Binding of anionic phospholipids (APLs) such as phosphatidylserine (PS) and phosphatidic acid (PA) increases enzymatic activity. Catalyzes the hydrolysis of sphingomyelin to form ceramide and phosphocholine. Ceramide mediates numerous cellular functions, such as apoptosis and growth arrest, and is capable of regulating these 2 cellular events independently. Also hydrolyzes sphingosylphosphocholine. Regulates the cell cycle by acting as a growth suppressor in confluent cells. Probably acts as a regulator of postnatal development and participates in bone and dentin mineralization. Binds to anionic phospholipids (APLs) such as phosphatidylserine (PS) and phosphatidic acid (PA) that modulate enzymatic activity and subcellular location. May be involved in IL-1-beta-induced JNK activation in hepatocytes. May act as a mediator in transcriptional regulation of NOS2/iNOS via the NF-kappa-B activation under inflammatory conditions. The protein is Sphingomyelin phosphodiesterase 3 of Homo sapiens (Human).